Here is an 85-residue protein sequence, read N- to C-terminus: Small ribosomal subunit protein uS17 (85 aa).

This sequence belongs to the universal ribosomal protein uS17 family. In terms of assembly, part of the 30S ribosomal subunit.

One of the primary rRNA binding proteins, it binds specifically to the 5'-end of 16S ribosomal RNA. The chain is Small ribosomal subunit protein uS17 from Rhodospirillum centenum (strain ATCC 51521 / SW).